The sequence spans 676 residues: Urocanate hydratase (676 aa).

NAD(+) contacts are provided by residues 126–127 (GG), Q204, 251–253 (GMS), E271, 317–318 (NV), 343–347 (QTSCH), 354–355 (YY), and Y403. K534 is modified (N6-succinyllysine). G594 lines the NAD(+) pocket.

Belongs to the urocanase family. It depends on NAD(+) as a cofactor.

It catalyses the reaction 4-imidazolone-5-propanoate = trans-urocanate + H2O. It functions in the pathway amino-acid degradation; L-histidine degradation into L-glutamate; N-formimidoyl-L-glutamate from L-histidine: step 2/3. In Mus musculus (Mouse), this protein is Urocanate hydratase (Uroc1).